The sequence spans 590 residues: Leucine-rich repeat transmembrane neuronal protein 4 (590 aa).

An N-terminal signal peptide occupies residues 1 to 30; sequence MGFRLITQLKGMSVLLVLFPTLLLVMLTGA. Positions 31–59 constitute an LRRNT domain; sequence QRACPKNCRCDGKIVYCESHAFADIPENI. Topologically, residues 31–424 are extracellular; the sequence is QRACPKNCRC…HEYEHVSFHK (394 aa). An N-linked (GlcNAc...) asparagine glycan is attached at asparagine 58. LRR repeat units follow at residues 60–83, 84–107, 108–131, 132–155, 157–179, 180–203, 205–227, 228–251, 252–275, and 276–299; these read SGGS…QFAG, LNQL…AFQG, IRRL…TFHP, VPNL…QFKG, RKLI…VFQD, CRNL…AFAG, LKLK…HFPR, LFNL…LTWT, WSSL…TFKC, and LPNL…TVNA. N-linked (GlcNAc...) asparagine glycosylation occurs at asparagine 126. N-linked (GlcNAc...) asparagine glycosylation occurs at asparagine 291. The LRRCT domain maps to 311–362; the sequence is NMWECSRSICPLFYWLKNFKGNKESTMICAGPKHIQGEKVSDAVETYNICSD. Residues 425–445 form a helical membrane-spanning segment; that stretch reads IIAGSVALFLSVAMILLVIYV. The Cytoplasmic segment spans residues 446-590; that stretch reads SWKRYPASMK…PAIYLERITN (145 aa).

The protein belongs to the LRRTM family. Peripherally associated with AMPAR complex. AMPAR complex consists of an inner core made of 4 pore-forming GluA/GRIA proteins (GRIA1, GRIA2, GRIA3 and GRIA4) and 4 major auxiliary subunits arranged in a twofold symmetry. One of the two pairs of distinct binding sites is occupied either by CNIH2, CNIH3 or CACNG2, CACNG3. The other harbors CACNG2, CACNG3, CACNG4, CACNG8 or GSG1L. This inner core of AMPAR complex is complemented by outer core constituents binding directly to the GluA/GRIA proteins at sites distinct from the interaction sites of the inner core constituents. Outer core constituents include at least PRRT1, PRRT2, CKAMP44/SHISA9, FRRS1L and NRN1. The proteins of the inner and outer core serve as a platform for other, more peripherally associated AMPAR constituents, including LRRTM4. Alone or in combination, these auxiliary subunits control the gating and pharmacology of the AMPAR complex and profoundly impact their biogenesis and protein processing. As to expression, expressed in the brain (at protein level).

It localises to the cell membrane. The protein localises to the postsynaptic cell membrane. May play a role in the development and maintenance of the nervous system. Exhibits strong synaptogenic activity, restricted to excitatory presynaptic differentiation. This chain is Leucine-rich repeat transmembrane neuronal protein 4 (Lrrtm4), found in Rattus norvegicus (Rat).